The following is a 2181-amino-acid chain: Genome polyprotein (2181 aa).

G80 carries the N-myristoyl glycine; by host lipid modification. 2 interaction with host receptor ANTXR1 regions span residues 316–337 (DYRT…PPNW) and 761–772 (RFGLYANPSGSG). Residues 1165 to 1333 (LGKTNLAQSL…YKKHTRLNFD (169 aa)) enclose the SF3 helicase domain. ATP is bound at residue 1197-1204 (GKPGCGKS). The segment at 1472 to 1500 (EETESEGSVKAPRSENAYDGPKKNSKPPG) is disordered. At Y1489 the chain carries O-(5'-phospho-RNA)-tyrosine. The 194-residue stretch at 1511-1704 (NVDMGFEAAV…AGTYISKLGL (194 aa)) folds into the Peptidase C3 domain. The active-site For protease 3C activity and deubiquitinase activity is the H1556. D1592 functions as the For protease 3C activity in the catalytic mechanism. The For protease 3C activity and deubiquitinase activity role is filled by C1668. The RdRp catalytic domain occupies 1950 to 2068 (KNTYDVDYSA…GTDYDLDFNE (119 aa)). Catalysis depends on for RdRp activity residues D1956 and D2054.

Interacts with host entry receptor ANTRX1. In terms of assembly, interacts with host IRF3; this interaction is involved in the suppression of IRF3 and IRF7 expression and phosphorylation by the virus. Interacts with host IRF7; this interaction is involved in the suppression of IRF3 and IRF7 expression and phosphorylation by the virus. Interacts with host MAVS; this interaction allows the cleavage of MAVS and subsequent suppression of host immunity. Interacts with host TRIF; this interaction allows the cleavage of TRIF and subsequent suppression of host immunity. Interacts with host TANK; this interaction allows the cleavage of TANK and subsequent suppression of host immunity. Interacts with host RIGI. Interacts with host TBK1. Interacts with host TRAF3. Specific enzymatic cleavages by the viral protease in vivo yield a variety of precursors and mature proteins. The polyprotein seems to be cotranslationally cleaved at the 2A/2B junction by a ribosomal skip from one codon to the next without formation of a peptide bond. This process would release the P1-2A peptide from the translational complex. In terms of processing, during virion maturation, immature virions are rendered infectious following cleavage of VP0 into VP4 and VP2. This maturation seems to be an autocatalytic event triggered by the presence of RNA in the capsid and is followed by a conformational change of the particle. Post-translationally, myristoylation is required during RNA encapsidation and formation of the mature virus particle. Uridylylated by the polymerase and is covalently linked to the 5'-end of genomic RNA. This uridylylated form acts as a nucleotide-peptide primer for the polymerase.

The protein localises to the virion. Its subcellular location is the host cytoplasm. It is found in the host nucleus. It localises to the host nucleolus. The protein resides in the host cytoplasmic vesicle membrane. The enzyme catalyses RNA(n) + a ribonucleoside 5'-triphosphate = RNA(n+1) + diphosphate. It carries out the reaction Selective cleavage of Gln-|-Gly bond in the poliovirus polyprotein. In other picornavirus reactions Glu may be substituted for Gln, and Ser or Thr for Gly.. It catalyses the reaction Thiol-dependent hydrolysis of ester, thioester, amide, peptide and isopeptide bonds formed by the C-terminal Gly of ubiquitin (a 76-residue protein attached to proteins as an intracellular targeting signal).. The catalysed reaction is ATP + H2O = ADP + phosphate + H(+). Its function is as follows. Forms an icosahedral capsid of pseudo T=3 symmetry with capsid proteins VP2 and VP3. Together they form an icosahedral capsid composed of 60 copies of each VP1, VP2, and VP3, with a diameter of approximately 325 Angstroms. VP4 lies on the inner surface of the protein shell formed by VP1, VP2 and VP3. All the three latter proteins contain a beta-sheet structure called beta-barrel jelly roll. VP1 is situated at the 12 fivefold axes, whereas VP2 and VP3 are located at the quasi-sixfold axes. Binds the host receptor ANTXR1 for attachment and uncoating (entry). Forms an icosahedral capsid of pseudo T=3 symmetry with capsid proteins VP2 and VP3. Together they form an icosahedral capsid composed of 60 copies of each VP1, VP2, and VP3, with a diameter of approximately 270 Angstroms. VP4 lies on the inner surface of the protein shell formed by VP1, VP2 and VP3. All the three latter proteins contain a beta-sheet structure called beta-barrel jelly roll. VP1 is situated at the 12 fivefold axes, whereas VP2 and VP3 are located at the quasi-sixfold axes. Binds the host receptor ANTXR1 for attachment and uncoating (entry). Functionally, forms an icosahedral capsid of pseudo T=3 symmetry with capsid proteins VP2 and VP3. Together they form an icosahedral capsid composed of 60 copies of each VP1, VP2, and VP3, with a diameter of approximately 270 Angstroms. VP4 lies on the inner surface of the protein shell formed by VP1, VP2 and VP3. All the three latter proteins contain a beta-sheet structure called beta-barrel jelly roll. VP1 is situated at the 12 fivefold axes, whereas VP2 and VP3 are located at the quasi-sixfold axes. Vp3 also seems to be involved in the binding to host receptor ANTXR1 for attachment and uncoating (entry). In terms of biological role, lies on the inner surface of the capsid shell. After binding to the host receptor, the capsid undergoes conformational changes. Capsid protein VP4 is released, capsid protein VP1 N-terminus is externalized, and together, they shape a pore in the host membrane through which the viral genome is translocated into the host cell cytoplasm. After genome has been released, the channel shrinks. Its function is as follows. VP0 precursor is a component of immature procapsids. Mediates self-processing of the polyprotein by a translational effect termed 'ribosome skipping'. Mechanistically, 2A-mediated cleavage occurs between the C-terminal glycine and the proline of the downstream protein 2B. Functionally, plays an essential role in the virus replication cycle by acting as a viroporin. Creates a pore in the host endoplasmic reticulum and as a consequence releases Ca2+ in the cytoplasm of infected cell. In turn, high levels of cytoplasmic calcium may trigger membrane trafficking and transport of viral ER-associated proteins to viroplasms, sites of viral genome replication. In terms of biological role, associates with and induces structural rearrangements of intracellular membranes. Its function is as follows. Covalently linked to the 5'-end of both the positive-strand and negative-strand genomic RNAs. Acts as a genome-linked replication primer. Cysteine protease that generates mature viral proteins from the precursor polyprotein. Inactivates crucial host adapter molecules in order to suppress antiviral type-I interferon (type-I IFN) and NF-kappaB production to escape host antiviral innate immune responses. Deubiquitinase that acts on both lysine-48- and lysine-63-linked polyubiquitin chains and inhibits the ubiquitination of the ATP-dependent RNA helicase RIGI, TANK-binding kinase 1 (TBK1), and TNF receptor-associated factor 3 (TRAF3), thereby blocking the expression of IFN-beta and IFN stimulated gene 54 (ISG54). Induces host IRF3 and IRF7 degradation thereby suppressing IRF3- and IRF7-induced type-I IFN production. Also decreases host IRF3 phosphorylation leading to negligible IRF3 activation. Cleaves host MAVS, TRIF and TANK, which are then unable to regulate pattern recognition receptor (PRR)-mediated type-I IFN production. Inhibits the integrated stress response (ISR) in the infected cell by disrupting eIF4GI-G3BP1 interaction. Stress granule formation is thus inhibited. Functionally, replicates the genomic and antigenomic RNAs by recognizing replications specific signals. Performs VPg uridylylation. The protein is Genome polyprotein of Sus scrofa (Pig).